Reading from the N-terminus, the 515-residue chain is Interferon alpha/beta receptor 2 (515 aa).

The N-terminal stretch at M1–G26 is a signal peptide. At I27 to K243 the chain is on the extracellular side. 2 cysteine pairs are disulfide-bonded: C39–C122 and C85–C93. N58, N87, N116, N188, and N192 each carry an N-linked (GlcNAc...) asparagine glycan. Residues C207 and C227 are joined by a disulfide bond. The helical transmembrane segment at I244 to L264 threads the bilayer. The Cytoplasmic portion of the chain corresponds to K265 to R515. 2 disordered regions span residues Y318–G418 and E455–R515. Y337 is subject to Phosphotyrosine. Residues P362–V375 are compositionally biased toward acidic residues. The residue at position 400 (S400) is a Phosphoserine. Residues G418–E444 form a mediates interaction with STAT2 (and required for the recruitment of USP18) region. Positions N464–G488 are enriched in polar residues. S467 bears the Phosphoserine mark. The residue at position 512 (Y512) is a Phosphotyrosine.

The protein belongs to the type II cytokine receptor family. As to quaternary structure, heterodimer with IFNAR1; forming the receptor for type I interferon. Interacts with JAK1. Interacts with the transcriptional factors STAT1 and STAT2. Interacts with USP18; indirectly via STAT2, it negatively regulates the assembly of the ternary interferon-IFNAR1-IFNAR2 complex and therefore type I interferon signaling. Post-translationally, phosphorylated on tyrosine residues upon interferon binding. Phosphorylation at Tyr-337 or Tyr-512 are sufficient to mediate interferon dependent activation of STAT1, STAT2 and STAT3 leading to antiproliferative effects on many different cell types. Glycosylated. Isoform 3 is detected in the urine (at protein level). Expressed in blood cells. Expressed in lymphoblastoid and fibrosarcoma cell lines.

The protein resides in the cell membrane. It is found in the secreted. In terms of biological role, together with IFNAR1, forms the heterodimeric receptor for type I interferons (including interferons alpha, beta, epsilon, omega and kappa). Type I interferon binding activates the JAK-STAT signaling cascade, resulting in transcriptional activation or repression of interferon-regulated genes that encode the effectors of the interferon response. Mechanistically, type I interferon-binding brings the IFNAR1 and IFNAR2 subunits into close proximity with one another, driving their associated Janus kinases (JAKs) (TYK2 bound to IFNAR1 and JAK1 bound to IFNAR2) to cross-phosphorylate one another. The activated kinases phosphorylate specific tyrosine residues on the intracellular domains of IFNAR1 and IFNAR2, forming docking sites for the STAT transcription factors (STAT1, STAT2 and STAT). STAT proteins are then phosphorylated by the JAKs, promoting their translocation into the nucleus to regulate expression of interferon-regulated genes. Functionally, potent inhibitor of type I IFN receptor activity. The protein is Interferon alpha/beta receptor 2 (IFNAR2) of Homo sapiens (Human).